Reading from the N-terminus, the 163-residue chain is Anthranilate 1,2-dioxygenase small subunit (163 aa).

The protein belongs to the bacterial ring-hydroxylating dioxygenase beta subunit family. The anthranilate dioxygenase (AntDO) multicomponent enzyme system is composed of an oxygenase component and a NADH:acceptor reductase component (AntC). The oxygenase component is a heterohexamer of 3 large (AntA) and 3 small (AntB) subunits.

The catalysed reaction is anthranilate + NADH + O2 + 3 H(+) = catechol + NH4(+) + CO2 + NAD(+). The enzyme catalyses anthranilate + NADPH + O2 + 3 H(+) = catechol + NH4(+) + CO2 + NADP(+). It functions in the pathway aromatic compound metabolism; anthranilate degradation via hydroxylation; catechol from anthranilate: step 1/1. Component of anthranilate dioxygenase multicomponent enzyme system which catalyzes the incorporation of both atoms of molecular oxygen into anthranilate to form catechol. This Acinetobacter baylyi (strain ATCC 33305 / BD413 / ADP1) protein is Anthranilate 1,2-dioxygenase small subunit.